Here is a 436-residue protein sequence, read N- to C-terminus: UDP-N-acetylmuramate--L-alanine ligase (436 aa).

Residue 108–114 participates in ATP binding; the sequence is GAHGKTS.

It belongs to the MurCDEF family.

The protein resides in the cytoplasm. The catalysed reaction is UDP-N-acetyl-alpha-D-muramate + L-alanine + ATP = UDP-N-acetyl-alpha-D-muramoyl-L-alanine + ADP + phosphate + H(+). It participates in cell wall biogenesis; peptidoglycan biosynthesis. Functionally, cell wall formation. The chain is UDP-N-acetylmuramate--L-alanine ligase from Bacillus cereus (strain G9842).